The sequence spans 159 residues: Ribosomal RNA large subunit methyltransferase H (159 aa).

S-adenosyl-L-methionine-binding positions include Leu-76, Gly-108, and 127–132 (FSKMTF).

Belongs to the RNA methyltransferase RlmH family. Homodimer.

The protein localises to the cytoplasm. The catalysed reaction is pseudouridine(1915) in 23S rRNA + S-adenosyl-L-methionine = N(3)-methylpseudouridine(1915) in 23S rRNA + S-adenosyl-L-homocysteine + H(+). Functionally, specifically methylates the pseudouridine at position 1915 (m3Psi1915) in 23S rRNA. This chain is Ribosomal RNA large subunit methyltransferase H, found in Geobacillus thermodenitrificans (strain NG80-2).